The chain runs to 368 residues: tRNA-specific 2-thiouridylase MnmA (368 aa).

ATP is bound by residues 12 to 19 (AMSGGVDS) and Met-38. Positions 98 to 100 (NPD) are interaction with target base in tRNA. Residue Cys-103 is the Nucleophile of the active site. Cys-103 and Cys-200 are oxidised to a cystine. Gly-128 provides a ligand contact to ATP. The segment at 150–152 (KDQ) is interaction with tRNA. Cys-200 acts as the Cysteine persulfide intermediate in catalysis. The tract at residues 312-313 (RY) is interaction with tRNA.

This sequence belongs to the MnmA/TRMU family. Interacts with TusE.

It is found in the cytoplasm. It catalyses the reaction S-sulfanyl-L-cysteinyl-[protein] + uridine(34) in tRNA + AH2 + ATP = 2-thiouridine(34) in tRNA + L-cysteinyl-[protein] + A + AMP + diphosphate + H(+). Catalyzes the 2-thiolation of uridine at the wobble position (U34) of tRNA(Lys), tRNA(Glu) and tRNA(Gln), leading to the formation of s(2)U34, the first step of tRNA-mnm(5)s(2)U34 synthesis. Sulfur is provided by IscS, via a sulfur-relay system. Binds ATP and its substrate tRNAs. This chain is tRNA-specific 2-thiouridylase MnmA, found in Buchnera aphidicola subsp. Acyrthosiphon pisum (strain APS) (Acyrthosiphon pisum symbiotic bacterium).